The sequence spans 466 residues: Adenosylhomocysteinase (466 aa).

The substrate site is built by threonine 57, aspartate 132, and glutamate 192. 193-195 is an NAD(+) binding site; it reads TTT. Substrate contacts are provided by lysine 222 and aspartate 226. NAD(+) is bound by residues asparagine 227, 256–261, glutamate 279, asparagine 314, 335–337, and asparagine 380; these read GYGDVG and IGH.

This sequence belongs to the adenosylhomocysteinase family. NAD(+) serves as cofactor.

It is found in the cytoplasm. The enzyme catalyses S-adenosyl-L-homocysteine + H2O = L-homocysteine + adenosine. It participates in amino-acid biosynthesis; L-homocysteine biosynthesis; L-homocysteine from S-adenosyl-L-homocysteine: step 1/1. Functionally, may play a key role in the regulation of the intracellular concentration of adenosylhomocysteine. The chain is Adenosylhomocysteinase from Brucella abortus (strain S19).